Here is a 704-residue protein sequence, read N- to C-terminus: Elongation factor G (704 aa).

The region spanning 10–290 (NKVRNIGIMA…AVIDYLPSPL (281 aa)) is the tr-type G domain. Residues 19–26 (AHIDAGKT), 83–87 (DTPGH), and 137–140 (NKMD) contribute to the GTP site.

This sequence belongs to the TRAFAC class translation factor GTPase superfamily. Classic translation factor GTPase family. EF-G/EF-2 subfamily.

It is found in the cytoplasm. Its function is as follows. Catalyzes the GTP-dependent ribosomal translocation step during translation elongation. During this step, the ribosome changes from the pre-translocational (PRE) to the post-translocational (POST) state as the newly formed A-site-bound peptidyl-tRNA and P-site-bound deacylated tRNA move to the P and E sites, respectively. Catalyzes the coordinated movement of the two tRNA molecules, the mRNA and conformational changes in the ribosome. This Clavibacter sepedonicus (Clavibacter michiganensis subsp. sepedonicus) protein is Elongation factor G.